Here is a 149-residue protein sequence, read N- to C-terminus: 3-dehydroquinate dehydratase (149 aa).

The active-site Proton acceptor is tyrosine 26. Positions 78, 84, and 91 each coordinate substrate. The active-site Proton donor is the histidine 104. Substrate-binding positions include 105-106 (IS) and arginine 115.

The protein belongs to the type-II 3-dehydroquinase family. As to quaternary structure, homododecamer.

It carries out the reaction 3-dehydroquinate = 3-dehydroshikimate + H2O. The protein operates within metabolic intermediate biosynthesis; chorismate biosynthesis; chorismate from D-erythrose 4-phosphate and phosphoenolpyruvate: step 3/7. Its function is as follows. Catalyzes a trans-dehydration via an enolate intermediate. In Buchnera aphidicola subsp. Schizaphis graminum (strain Sg), this protein is 3-dehydroquinate dehydratase (aroQ).